Reading from the N-terminus, the 236-residue chain is C-&gt;U-editing enzyme APOBEC-1 (236 aa).

A CMP/dCMP-type deaminase domain is found at 10–134 (KDYTLRRRIE…RRNRQGLKDL (125 aa)). Residue His-61 participates in Zn(2+) binding. Glu-63 functions as the Proton donor in the catalytic mechanism. Positions 93 and 96 each coordinate Zn(2+).

Belongs to the cytidine and deoxycytidylate deaminase family. Homodimer. Interacts with A1CF; form an mRNA editing complex. Interacts with RBM47; form an mRNA editing complex. Found in a complex with CELF2/CUGBP2 and A1CF. Interacts with HNRPAB. Interacts with SYNCRIP. Requires Zn(2+) as cofactor. In terms of tissue distribution, expressed exclusively in the intestine.

It is found in the cytoplasm. Its subcellular location is the nucleus. It carries out the reaction a cytidine in mRNA + H2O + H(+) = a uridine in mRNA + NH4(+). The enzyme catalyses cytidine(6666) in apoB mRNA + H2O + H(+) = uridine(6666) in apoB mRNA + NH4(+). Its function is as follows. Cytidine deaminase catalyzing the cytidine to uridine postranscriptional editing of a variety of mRNAs. Form complexes with cofactors that confer differential editing activity and selectivity. Responsible for the postranscriptional editing of a CAA codon for Gln to a UAA codon for stop in the apolipoprotein B mRNA. Also involved in CGA (Arg) to UGA (Stop) editing in the NF1 mRNA. May also play a role in the epigenetic regulation of gene expression by participating in DNA demethylation. The sequence is that of C-&gt;U-editing enzyme APOBEC-1 from Oryctolagus cuniculus (Rabbit).